The sequence spans 557 residues: Aerobic glycerol-3-phosphate dehydrogenase (557 aa).

Position 21–49 (Asp21–Glu49) interacts with FAD.

It belongs to the FAD-dependent glycerol-3-phosphate dehydrogenase family. The cofactor is FAD.

It is found in the cytoplasm. It carries out the reaction a quinone + sn-glycerol 3-phosphate = dihydroxyacetone phosphate + a quinol. It functions in the pathway polyol metabolism; glycerol degradation via glycerol kinase pathway; glycerone phosphate from sn-glycerol 3-phosphate (aerobic route): step 1/1. This is Aerobic glycerol-3-phosphate dehydrogenase (glpD) from Staphylococcus epidermidis (strain ATCC 35984 / DSM 28319 / BCRC 17069 / CCUG 31568 / BM 3577 / RP62A).